Consider the following 146-residue polypeptide: Large-conductance mechanosensitive channel (146 aa).

2 consecutive transmembrane segments (helical) span residues 12-32 (AFAMKGNVVDMAVGVIIGGAF) and 88-108 (LQATFDFLIIAFSIFLFIKLI).

It belongs to the MscL family. As to quaternary structure, homopentamer.

The protein resides in the cell inner membrane. Channel that opens in response to stretch forces in the membrane lipid bilayer. May participate in the regulation of osmotic pressure changes within the cell. The polypeptide is Large-conductance mechanosensitive channel (Bacteroides fragilis (strain ATCC 25285 / DSM 2151 / CCUG 4856 / JCM 11019 / LMG 10263 / NCTC 9343 / Onslow / VPI 2553 / EN-2)).